Here is a 668-residue protein sequence, read N- to C-terminus: Phosphoglycerate transport system sensor protein PgtB (668 aa).

The next 2 membrane-spanning stretches (helical) occupy residues 20-40 (GAFLTGALLTLIVSMVSLYSW) and 342-362 (LILVATLLALLLAWGLNHYFI). An HAMP domain is found at 364 to 416 (SRLVKRFTALNQAVVQIGLGRTDSTIPVYGRDELGRIARLLRHTLGQLNMQRR). In terms of domain architecture, Histidine kinase spans 454–663 (TLAHEINQPL…CVVLQFSVTD (210 aa)). Residue histidine 457 is modified to Phosphohistidine; by autocatalysis.

It localises to the cell inner membrane. The enzyme catalyses ATP + protein L-histidine = ADP + protein N-phospho-L-histidine.. Functionally, member of the two-component regulatory system PgtB/PgtA that regulates the inducible phosphoglycerate transport system. Activates PgtA by phosphorylation. This chain is Phosphoglycerate transport system sensor protein PgtB (pgtB), found in Salmonella typhimurium (strain LT2 / SGSC1412 / ATCC 700720).